The chain runs to 179 residues: Large ribosomal subunit protein uL5 (179 aa).

The protein belongs to the universal ribosomal protein uL5 family. Part of the 50S ribosomal subunit; part of the 5S rRNA/L5/L18/L25 subcomplex. Contacts the 5S rRNA and the P site tRNA. Forms a bridge to the 30S subunit in the 70S ribosome.

Its function is as follows. This is one of the proteins that bind and probably mediate the attachment of the 5S RNA into the large ribosomal subunit, where it forms part of the central protuberance. In the 70S ribosome it contacts protein S13 of the 30S subunit (bridge B1b), connecting the 2 subunits; this bridge is implicated in subunit movement. Contacts the P site tRNA; the 5S rRNA and some of its associated proteins might help stabilize positioning of ribosome-bound tRNAs. This chain is Large ribosomal subunit protein uL5, found in Geotalea uraniireducens (strain Rf4) (Geobacter uraniireducens).